The sequence spans 187 residues: Elongation factor P (187 aa).

It belongs to the elongation factor P family.

The protein localises to the cytoplasm. The protein operates within protein biosynthesis; polypeptide chain elongation. Functionally, involved in peptide bond synthesis. Stimulates efficient translation and peptide-bond synthesis on native or reconstituted 70S ribosomes in vitro. Probably functions indirectly by altering the affinity of the ribosome for aminoacyl-tRNA, thus increasing their reactivity as acceptors for peptidyl transferase. In Parasynechococcus marenigrum (strain WH8102), this protein is Elongation factor P.